Reading from the N-terminus, the 392-residue chain is Succinate--CoA ligase [ADP-forming] subunit beta (392 aa).

Residues 9 to 247 (KEILRVCGVP…LYEEDPKEIE (239 aa)) enclose the ATP-grasp domain. ATP contacts are provided by residues lysine 49, 56–58 (GRG), glutamate 102, glutamine 105, and glutamate 110. Asparagine 202 and aspartate 216 together coordinate Mg(2+). Substrate contacts are provided by residues asparagine 267 and 324–326 (GIM).

This sequence belongs to the succinate/malate CoA ligase beta subunit family. Heterotetramer of two alpha and two beta subunits. The cofactor is Mg(2+).

It carries out the reaction succinate + ATP + CoA = succinyl-CoA + ADP + phosphate. The enzyme catalyses GTP + succinate + CoA = succinyl-CoA + GDP + phosphate. The protein operates within carbohydrate metabolism; tricarboxylic acid cycle; succinate from succinyl-CoA (ligase route): step 1/1. In terms of biological role, succinyl-CoA synthetase functions in the citric acid cycle (TCA), coupling the hydrolysis of succinyl-CoA to the synthesis of either ATP or GTP and thus represents the only step of substrate-level phosphorylation in the TCA. The beta subunit provides nucleotide specificity of the enzyme and binds the substrate succinate, while the binding sites for coenzyme A and phosphate are found in the alpha subunit. The protein is Succinate--CoA ligase [ADP-forming] subunit beta of Neorickettsia sennetsu (strain ATCC VR-367 / Miyayama) (Ehrlichia sennetsu).